The sequence spans 314 residues: MVKKNFIPSVSLVRRDLPTLVTTTTSSTALSKPTSSVVSETSSKSLPSLTSSAFSTSSGATSSSSLIVASITPPSTAGNPFILNAADKPNGTVYIAVGAVIGAIFISILIWWLVSSYLSRRFTMTNSYANDSKNLYRGHHKHSSSLQSNPFDINDEKSYMQDDWDSMSQLESSQYEDAASPFNPIQDPFTDSRRSLFISPTLQVSQYEKSHSRHQSKDTNIFIDDPSLYVGTYLEEEEEEERKLNLNRPQRAASPERKEKKINSMEGYHKRNQSSLGLIPVASATSNTSSPKKAHKRQAPSMFLDDVLNGREII.

The disordered stretch occupies residues 32–60; sequence KPTSSVVSETSSKSLPSLTSSAFSTSSGA. Residues 93 to 113 traverse the membrane as a helical segment; the sequence is VYIAVGAVIGAIFISILIWWL. 3 positions are modified to phosphoserine: Ser-148, Ser-254, and Ser-274. Positions 240 to 309 are disordered; that stretch reads EERKLNLNRP…PSMFLDDVLN (70 aa). Positions 254–269 are enriched in basic and acidic residues; the sequence is SPERKEKKINSMEGYH.

The protein belongs to the PRM5 family.

It is found in the vacuole membrane. The protein is Vacuolar membrane protein EC1118_1N9_3125g of Saccharomyces cerevisiae (strain Lalvin EC1118 / Prise de mousse) (Baker's yeast).